Reading from the N-terminus, the 575-residue chain is Cytokinin dehydrogenase 1 (575 aa).

The N-terminal stretch at 1–31 (MGLTSSLRFHRQNNKTFLGIFMILVLSCIPG) is a signal peptide. Residues Asn-14, Asn-38, and Asn-115 are each glycosylated (N-linked (GlcNAc...) asparagine). One can recognise an FAD-binding PCMH-type domain in the interval 84–262 (YQLPPLAILH…TRARISLEPA (179 aa)). 3 residues coordinate FAD: Ala-120, Gly-122, and Gly-124. His-125 carries the pros-8alpha-FAD histidine modification. 7 residues coordinate FAD: Ser-126, Gln-130, Asp-186, Thr-191, Ser-197, Ile-201, and Ile-252. N-linked (GlcNAc...) asparagine glycans are attached at residues Asn-303, Asn-318, Asn-437, and Asn-467. FAD is bound by residues Tyr-498 and Gln-536.

Belongs to the oxygen-dependent FAD-linked oxidoreductase family. It depends on FAD as a cofactor. In terms of tissue distribution, expressed in shoot apexes, lateral shoot meristems, growing tissues of young flowers, and weakly at the root-hypocotyl junction.

It localises to the vacuole. The catalysed reaction is N(6)-dimethylallyladenine + A + H2O = 3-methyl-2-butenal + adenine + AH2. Catalyzes the oxidation of cytokinins, a family of N(6)-substituted adenine derivatives that are plant hormones, where the substituent is an isopentenyl group. Catalyzes in vitro the oxidation of various types of cytokinin nucleotides that are known as direct products of cytokinin biosynthesis. Promotes adventitious root initiation downstream of MYC2-dependent jasmonate signaling. Cytokinin degraded by CKX1 is required for cell division in the female gametophyte by modulating the expression of cell cycle genes. The chain is Cytokinin dehydrogenase 1 (CKX1) from Arabidopsis thaliana (Mouse-ear cress).